The sequence spans 122 residues: Large ribosomal subunit protein uL14 (122 aa).

Belongs to the universal ribosomal protein uL14 family. Part of the 50S ribosomal subunit. Forms a cluster with proteins L3 and L19. In the 70S ribosome, L14 and L19 interact and together make contacts with the 16S rRNA in bridges B5 and B8.

In terms of biological role, binds to 23S rRNA. Forms part of two intersubunit bridges in the 70S ribosome. The chain is Large ribosomal subunit protein uL14 from Bifidobacterium animalis subsp. lactis (strain AD011).